The primary structure comprises 155 residues: Small ribosomal subunit protein uS7c (155 aa).

The protein belongs to the universal ribosomal protein uS7 family. As to quaternary structure, part of the 30S ribosomal subunit.

It localises to the plastid. The protein resides in the chloroplast. In terms of biological role, one of the primary rRNA binding proteins, it binds directly to 16S rRNA where it nucleates assembly of the head domain of the 30S subunit. This Beta vulgaris (Sugar beet) protein is Small ribosomal subunit protein uS7c.